Here is a 274-residue protein sequence, read N- to C-terminus: tRNA-cytidine(32) 2-sulfurtransferase (274 aa).

The short motif at 40-45 (SGGKDS) is the PP-loop motif element. [4Fe-4S] cluster is bound by residues C115, C118, and C206.

It belongs to the TtcA family. In terms of assembly, homodimer. The cofactor is Mg(2+). Requires [4Fe-4S] cluster as cofactor.

The protein localises to the cytoplasm. It carries out the reaction cytidine(32) in tRNA + S-sulfanyl-L-cysteinyl-[cysteine desulfurase] + AH2 + ATP = 2-thiocytidine(32) in tRNA + L-cysteinyl-[cysteine desulfurase] + A + AMP + diphosphate + H(+). The protein operates within tRNA modification. In terms of biological role, catalyzes the ATP-dependent 2-thiolation of cytidine in position 32 of tRNA, to form 2-thiocytidine (s(2)C32). The sulfur atoms are provided by the cysteine/cysteine desulfurase (IscS) system. The chain is tRNA-cytidine(32) 2-sulfurtransferase from Pseudomonas putida (strain GB-1).